Here is a 257-residue protein sequence, read N- to C-terminus: 3-oxo-5-alpha-steroid 4-dehydrogenase 1 (257 aa).

Helical transmembrane passes span 7-27, 50-70, 84-104, 109-129, 149-169, and 208-228; these read FLLD…YVLL, AAWT…CAGA, ILLA…PFLI, PMPL…GYLQ, FLTG…SDHV, and ALAS…CVLF.

It belongs to the steroid 5-alpha reductase family.

Its subcellular location is the microsome membrane. It is found in the endoplasmic reticulum membrane. It catalyses the reaction a 3-oxo-5alpha-steroid + NADP(+) = a 3-oxo-Delta(4)-steroid + NADPH + H(+). It carries out the reaction 5alpha-pregnane-3,20-dione + NADP(+) = progesterone + NADPH + H(+). The catalysed reaction is 17beta-hydroxy-5alpha-androstan-3-one + NADP(+) = testosterone + NADPH + H(+). The enzyme catalyses androst-4-ene-3,17-dione + NADPH + H(+) = 5alpha-androstan-3,17-dione + NADP(+). Converts testosterone into 5-alpha-dihydrotestosterone and progesterone or corticosterone into their corresponding 5-alpha-3-oxosteroids. It plays a central role in sexual differentiation and androgen physiology. This Bos taurus (Bovine) protein is 3-oxo-5-alpha-steroid 4-dehydrogenase 1 (SRD5A1).